The primary structure comprises 139 residues: Classical arabinogalactan protein 3 (139 aa).

A signal peptide spans 1–21 (MALKTLQALIFLGLFAASCLA). Residue Gln22 is modified to Pyrrolidone carboxylic acid. The disordered stretch occupies residues 30–115 (TFLPPVESPS…PAPRADGPVA (86 aa)). 2 stretches are compositionally biased toward pro residues: residues 46–77 (AEPP…PPTT) and 97–107 (PSGPTPAPAPA). Residue Asp116 is the site of GPI-anchor amidated aspartate attachment. The propeptide at 117–139 (SALTNKAFLVSTVIAGALYAVLA) is removed in mature form.

Belongs to the classical AGP family. In terms of processing, O-glycosylated on the hydroxyproline residues. Expressed at a low level in roots.

It localises to the cell membrane. In terms of biological role, proteoglycan that seems to be implicated in diverse developmental roles such as differentiation, cell-cell recognition, embryogenesis and programmed cell death. The polypeptide is Classical arabinogalactan protein 3 (AGP3) (Arabidopsis thaliana (Mouse-ear cress)).